We begin with the raw amino-acid sequence, 279 residues long: S-methyl-5'-thioadenosine phosphorylase (279 aa).

Phosphate contacts are provided by residues Ser13, 55–56, and 88–89; these read RH and TA. Position 191 (Met191) interacts with substrate. Thr192 is a binding site for phosphate. 215-217 lines the substrate pocket; the sequence is DYD.

It belongs to the PNP/MTAP phosphorylase family. MTAP subfamily. Homotrimer.

The protein localises to the cytoplasm. It is found in the nucleus. The catalysed reaction is S-methyl-5'-thioadenosine + phosphate = 5-(methylsulfanyl)-alpha-D-ribose 1-phosphate + adenine. The protein operates within amino-acid biosynthesis; L-methionine biosynthesis via salvage pathway; S-methyl-5-thio-alpha-D-ribose 1-phosphate from S-methyl-5'-thioadenosine (phosphorylase route): step 1/1. Its function is as follows. Catalyzes the reversible phosphorylation of S-methyl-5'-thioadenosine (MTA) to adenine and 5-methylthioribose-1-phosphate. Involved in the breakdown of MTA, a major by-product of polyamine biosynthesis. Responsible for the first step in the methionine salvage pathway after MTA has been generated from S-adenosylmethionine. Has broad substrate specificity with 6-aminopurine nucleosides as preferred substrates. The protein is S-methyl-5'-thioadenosine phosphorylase of Aedes aegypti (Yellowfever mosquito).